The following is a 47-amino-acid chain: uncharacterized protein (47 aa).

A disordered region spans residues 22–47 (VGPRTKRANQASPPVGRHSSRLMCPG).

This is an uncharacterized protein from Saccharomyces cerevisiae (strain ATCC 204508 / S288c) (Baker's yeast).